The sequence spans 155 residues: Protein FAM162B (155 aa).

Residues 95-114 traverse the membrane as a helical segment; that stretch reads VKACYIMMGLTIFACLVMIV.

Belongs to the UPF0389 family.

It localises to the membrane. The sequence is that of Protein FAM162B (fam162b) from Danio rerio (Zebrafish).